The chain runs to 338 residues: Glyceraldehyde-3-phosphate dehydrogenase, cytosolic (338 aa).

The tract at residues 2 to 153 is binding to NAD; sequence ADKKIKIGIN…YKSDLNIVSN (152 aa). NAD(+)-binding positions include 15–16 and D37; that span reads RI. An external loop region spans residues 56-75; the sequence is GQWKHNELKVKDEKTLLFGE. R84 contributes to the NAD(+) binding site. The tract at residues 154-338 is catalytic; sequence ASCTTNCLAP…VDLIIHMSKA (185 aa). 155–157 contributes to the D-glyceraldehyde 3-phosphate binding site; that stretch reads SCT. Residue C156 is the Nucleophile of the active site. Residues C156 and C160 each carry the S-nitrosocysteine modification. The tract at residues 183–206 is S-loop; it reads HSITATQKTVDGPSMKDWRGGRAA. D-glyceraldehyde 3-phosphate contacts are provided by residues T186, 215–216, and R238; that span reads TG. N320 lines the NAD(+) pocket.

It belongs to the glyceraldehyde-3-phosphate dehydrogenase family. In terms of assembly, homotetramer.

It is found in the cytoplasm. It carries out the reaction D-glyceraldehyde 3-phosphate + phosphate + NAD(+) = (2R)-3-phospho-glyceroyl phosphate + NADH + H(+). It functions in the pathway carbohydrate degradation; glycolysis; pyruvate from D-glyceraldehyde 3-phosphate: step 1/5. Functionally, key enzyme in glycolysis that catalyzes the first step of the pathway by converting D-glyceraldehyde 3-phosphate (G3P) into 3-phospho-D-glyceroyl phosphate. Essential for the maintenance of cellular ATP levels and carbohydrate metabolism. This is Glyceraldehyde-3-phosphate dehydrogenase, cytosolic (GAPC) from Sinapis alba (White mustard).